Here is a 1071-residue protein sequence, read N- to C-terminus: ATP-dependent helicase/deoxyribonuclease subunit B (1071 aa).

It belongs to the helicase family. AddB/RexB type 2 subfamily. Heterodimer of AddA and RexB. It depends on Mg(2+) as a cofactor.

In terms of biological role, the heterodimer acts as both an ATP-dependent DNA helicase and an ATP-dependent, dual-direction single-stranded exonuclease. Recognizes the chi site generating a DNA molecule suitable for the initiation of homologous recombination. This subunit has 5' -&gt; 3' nuclease activity but not helicase activity. The chain is ATP-dependent helicase/deoxyribonuclease subunit B from Streptococcus pyogenes serotype M6 (strain ATCC BAA-946 / MGAS10394).